Here is a 218-residue protein sequence, read N- to C-terminus: Host range factor 1 (218 aa).

In terms of biological role, facilitates AcMNPV replication in two non-permissive cell lines, IPLB-Ld652Y and IPLB-LdFB. The chain is Host range factor 1 (HRF-1) from Lepidoptera (butterflies and moths).